The following is a 206-amino-acid chain: Pyridoxine/pyridoxamine 5'-phosphate oxidase (206 aa).

Residues 49–54 (RMVLLK), 69–70 (YT), K76, and Q98 each bind FMN. Substrate is bound at residue K54. Residues Y116, R120, and S124 each contribute to the substrate site. Residues 133 to 134 (QS) and W177 contribute to the FMN site. 183–185 (RLH) provides a ligand contact to substrate. R187 lines the FMN pocket.

The protein belongs to the pyridoxamine 5'-phosphate oxidase family. As to quaternary structure, homodimer. The cofactor is FMN.

It catalyses the reaction pyridoxamine 5'-phosphate + O2 + H2O = pyridoxal 5'-phosphate + H2O2 + NH4(+). The enzyme catalyses pyridoxine 5'-phosphate + O2 = pyridoxal 5'-phosphate + H2O2. It functions in the pathway cofactor metabolism; pyridoxal 5'-phosphate salvage; pyridoxal 5'-phosphate from pyridoxamine 5'-phosphate: step 1/1. It participates in cofactor metabolism; pyridoxal 5'-phosphate salvage; pyridoxal 5'-phosphate from pyridoxine 5'-phosphate: step 1/1. Catalyzes the oxidation of either pyridoxine 5'-phosphate (PNP) or pyridoxamine 5'-phosphate (PMP) into pyridoxal 5'-phosphate (PLP). This is Pyridoxine/pyridoxamine 5'-phosphate oxidase from Jannaschia sp. (strain CCS1).